The chain runs to 61 residues: Large ribosomal subunit protein uL30 (61 aa).

The protein belongs to the universal ribosomal protein uL30 family. As to quaternary structure, part of the 50S ribosomal subunit.

The sequence is that of Large ribosomal subunit protein uL30 from Teredinibacter turnerae (strain ATCC 39867 / T7901).